A 307-amino-acid polypeptide reads, in one-letter code: Ornithine carbamoyltransferase (307 aa).

Residues 56 to 59, Gln83, Arg107, and 134 to 137 contribute to the carbamoyl phosphate site; these read STRT and HPCQ. L-ornithine-binding positions include Asn165, Asp223, and 227–228; that span reads SM. Residues 263-264 and Arg291 contribute to the carbamoyl phosphate site; that span reads CL.

It belongs to the aspartate/ornithine carbamoyltransferase superfamily. OTCase family.

The protein resides in the cytoplasm. It carries out the reaction carbamoyl phosphate + L-ornithine = L-citrulline + phosphate + H(+). It participates in amino-acid biosynthesis; L-arginine biosynthesis; L-arginine from L-ornithine and carbamoyl phosphate: step 1/3. Reversibly catalyzes the transfer of the carbamoyl group from carbamoyl phosphate (CP) to the N(epsilon) atom of ornithine (ORN) to produce L-citrulline. This Cupriavidus metallidurans (strain ATCC 43123 / DSM 2839 / NBRC 102507 / CH34) (Ralstonia metallidurans) protein is Ornithine carbamoyltransferase.